The chain runs to 292 residues: Putative FNIP repeat-containing protein L281 (292 aa).

An FNIP repeat occupies 95–134 (FNKSIDDIPSTITHLSLGAAFNGEVSNIPTSVTHLKLGVS).

In Acanthamoeba polyphaga mimivirus (APMV), this protein is Putative FNIP repeat-containing protein L281.